The sequence spans 176 residues: Interleukin-20 (176 aa).

Residues 1–24 (MKGFGLAFGLFSAVGFLLWTPLTG) form the signal peptide. 3 disulfide bridges follow: cysteine 33–cysteine 126, cysteine 80–cysteine 132, and cysteine 81–cysteine 134.

The protein belongs to the IL-10 family. Forms a 1:1:1 heterotrimeric complex with its primary high-affinity heterodimeric receptor IL20RA/IL20RB.

The protein localises to the secreted. Its function is as follows. Pro-inflammatory and angiogenic cytokine mainly secreted by monocytes and skin keratinocytes that plays crucial roles in immune responses, regulation of inflammatory responses, hemopoiesis, as well as epidermal cell and keratinocyte differentiation. Enhances tissue remodeling and wound-healing activities and restores the homeostasis of epithelial layers during infection and inflammatory responses to maintain tissue integrity. Affects multiple actin-mediated functions in activated neutrophils leading to inhibition of phagocytosis, granule exocytosis, and migration. Exert its effects via the type I IL-20 receptor complex consisting of IL20RA and IL20RB. Alternatively, can mediate its activity through a second receptor complex called type II IL-20 receptor complex composed of IL22RA1 and IL20RB. Acts as an arteriogenic and vascular remodeling factory by activating a range of signaling processes including phosphorylations of JAK2 and STAT5 as well as activation of the serine and threonine kinases AKT and ERK1/2. Alternatively, can activate STAT3 phosphorylation and transcriptional activity in a JAK2, ERK1/2 and p38 MAPK-dependent manner in keratinocytes. In Mus musculus (Mouse), this protein is Interleukin-20 (Il20).